A 390-amino-acid polypeptide reads, in one-letter code: NADH-quinone oxidoreductase subunit D (390 aa).

This sequence belongs to the complex I 49 kDa subunit family. As to quaternary structure, NDH-1 is composed of 14 different subunits. Subunits NuoB, C, D, E, F, and G constitute the peripheral sector of the complex.

It is found in the cell membrane. The catalysed reaction is a quinone + NADH + 5 H(+)(in) = a quinol + NAD(+) + 4 H(+)(out). In terms of biological role, NDH-1 shuttles electrons from NADH, via FMN and iron-sulfur (Fe-S) centers, to quinones in the respiratory chain. The immediate electron acceptor for the enzyme in this species is believed to be ubiquinone. Couples the redox reaction to proton translocation (for every two electrons transferred, four hydrogen ions are translocated across the cytoplasmic membrane), and thus conserves the redox energy in a proton gradient. This is NADH-quinone oxidoreductase subunit D from Wolbachia sp. subsp. Brugia malayi (strain TRS).